A 79-amino-acid chain; its full sequence is RNA-binding protein Hfq (79 aa).

Residues 10–69 (GPFLNALRKEHVPVSIYLVNGIKLQGNIESFDQYVVLLRNTVTQMVYKHAISTVVPARAV) form the Sm domain.

Belongs to the Hfq family. Homohexamer.

Functionally, RNA chaperone that binds small regulatory RNA (sRNAs) and mRNAs to facilitate mRNA translational regulation in response to envelope stress, environmental stress and changes in metabolite concentrations. Also binds with high specificity to tRNAs. The polypeptide is RNA-binding protein Hfq (Cupriavidus necator (strain ATCC 17699 / DSM 428 / KCTC 22496 / NCIMB 10442 / H16 / Stanier 337) (Ralstonia eutropha)).